The following is a 579-amino-acid chain: Arginine--tRNA ligase (579 aa).

Residues 123 to 133 carry the 'HIGH' region motif; sequence ANPTGPVHVGR.

The protein belongs to the class-I aminoacyl-tRNA synthetase family.

It is found in the cytoplasm. The catalysed reaction is tRNA(Arg) + L-arginine + ATP = L-arginyl-tRNA(Arg) + AMP + diphosphate. The protein is Arginine--tRNA ligase of Haloarcula marismortui (strain ATCC 43049 / DSM 3752 / JCM 8966 / VKM B-1809) (Halobacterium marismortui).